The sequence spans 336 residues: Anthranilate phosphoribosyltransferase (336 aa).

5-phospho-alpha-D-ribose 1-diphosphate contacts are provided by residues glycine 79, 82–83 (GD), threonine 87, 89–92 (NIST), 107–115 (KHGNRCVSS), and alanine 119. Glycine 79 contributes to the anthranilate binding site. Mg(2+) is bound at residue serine 91. Asparagine 110 serves as a coordination point for anthranilate. Residue arginine 165 participates in anthranilate binding. Mg(2+) is bound by residues aspartate 224 and glutamate 225.

The protein belongs to the anthranilate phosphoribosyltransferase family. In terms of assembly, homodimer. Requires Mg(2+) as cofactor.

The enzyme catalyses N-(5-phospho-beta-D-ribosyl)anthranilate + diphosphate = 5-phospho-alpha-D-ribose 1-diphosphate + anthranilate. It participates in amino-acid biosynthesis; L-tryptophan biosynthesis; L-tryptophan from chorismate: step 2/5. Its function is as follows. Catalyzes the transfer of the phosphoribosyl group of 5-phosphorylribose-1-pyrophosphate (PRPP) to anthranilate to yield N-(5'-phosphoribosyl)-anthranilate (PRA). The sequence is that of Anthranilate phosphoribosyltransferase from Lachnoclostridium phytofermentans (strain ATCC 700394 / DSM 18823 / ISDg) (Clostridium phytofermentans).